Reading from the N-terminus, the 123-residue chain is MATINQLVRQPRKRIVEKSDVPALQNCPQRRGVCTRVYTTTPKKPNSALRKVCRVRLTNGYEVSSYIGGEGHNLQEHSVVLIRGGRVKDLPGVRYHTVRGSLDTSGVKDRKQGRSKYGTKRPK.

Position 89 is a 3-methylthioaspartic acid (Asp-89). Residues 100-123 form a disordered region; the sequence is GSLDTSGVKDRKQGRSKYGTKRPK. The segment covering 113 to 123 has biased composition (basic residues); that stretch reads GRSKYGTKRPK.

This sequence belongs to the universal ribosomal protein uS12 family. Part of the 30S ribosomal subunit. Contacts proteins S8 and S17. May interact with IF1 in the 30S initiation complex.

In terms of biological role, with S4 and S5 plays an important role in translational accuracy. Functionally, interacts with and stabilizes bases of the 16S rRNA that are involved in tRNA selection in the A site and with the mRNA backbone. Located at the interface of the 30S and 50S subunits, it traverses the body of the 30S subunit contacting proteins on the other side and probably holding the rRNA structure together. The combined cluster of proteins S8, S12 and S17 appears to hold together the shoulder and platform of the 30S subunit. The sequence is that of Small ribosomal subunit protein uS12 from Ectopseudomonas mendocina (strain ymp) (Pseudomonas mendocina).